Consider the following 203-residue polypeptide: Large ribosomal subunit protein uL18 (203 aa).

Belongs to the universal ribosomal protein uL18 family. As to quaternary structure, part of the 50S ribosomal subunit. Contacts the 5S and 23S rRNAs.

Its function is as follows. This is one of the proteins that bind and probably mediate the attachment of the 5S RNA into the large ribosomal subunit, where it forms part of the central protuberance. The polypeptide is Large ribosomal subunit protein uL18 (Pyrococcus abyssi (strain GE5 / Orsay)).